Here is a 434-residue protein sequence, read N- to C-terminus: Zinc finger and BTB domain-containing protein 8A (434 aa).

In terms of domain architecture, BTB spans 24–92 (CDCSILVEGK…VYSGKLSLTG (69 aa)). The interval 134–238 (SLSDKDTGSN…SGNHVSQSEE (105 aa)) is disordered. Phosphoserine occurs at positions 161 and 167. Residues Lys-172, Lys-176, and Lys-193 each participate in a glycyl lysine isopeptide (Lys-Gly) (interchain with G-Cter in SUMO2) cross-link. The span at 192–202 (AKHEQRKEPSK) shows a compositional bias: basic and acidic residues. The segment covering 226–238 (QTDSGNHVSQSEE) has biased composition (polar residues). 2 consecutive C2H2-type zinc fingers follow at residues 275-297 (FKCPFCTHVVKRKADLKRHLRCH) and 303-326 (YPCQACGKRFSRLDHLSSHFRTIH). Lys-430 is covalently cross-linked (Glycyl lysine isopeptide (Lys-Gly) (interchain with G-Cter in SUMO2)).

Its subcellular location is the nucleus. Its function is as follows. May be involved in transcriptional regulation. This Mus musculus (Mouse) protein is Zinc finger and BTB domain-containing protein 8A (Zbtb8a).